Consider the following 306-residue polypeptide: Serine/threonine-protein phosphatase PP2A-1 catalytic subunit (306 aa).

Mn(2+) contacts are provided by Asp-54, His-56, Asp-82, and Asn-114. His-115 serves as the catalytic Proton donor. Residues His-164 and His-238 each coordinate Mn(2+). Leu-306 is subject to Leucine methyl ester.

It belongs to the PPP phosphatase family. PP-2A subfamily. As to quaternary structure, PP2A consists of a common heterodimeric core enzyme, composed of a 36 kDa catalytic subunit (subunit C) and a 65 kDa constant regulatory subunit (subunit A), that associates with a variety of regulatory subunits such as subunits B (the R2/B/PR55/B55, R3/B''/PR72/PR130/PR59 and R5/B'/B56 families). Interacts with TAF12B. Interacts with SRK2E/OST1. Interacts with TAP46. The cofactor is Mn(2+). Reversibly methyl esterified on Leu-306 by leucine carboxyl methyltransferase 1 (LCMT1) and pectin methylesterase 1 (PME1). Carboxyl methylation influences the affinity of the catalytic subunit for the different regulatory subunits, thereby modulating the PP2A holoenzyme's substrate specificity, enzyme activity and cellular localization. Post-translationally, phosphorylation of either threonine (by autophosphorylation-activated protein kinase) or tyrosine results in inactivation of the phosphatase. Auto-dephosphorylation has been suggested as a mechanism for reactivation.

It localises to the cytoplasm. The enzyme catalyses O-phospho-L-seryl-[protein] + H2O = L-seryl-[protein] + phosphate. It catalyses the reaction O-phospho-L-threonyl-[protein] + H2O = L-threonyl-[protein] + phosphate. The sequence is that of Serine/threonine-protein phosphatase PP2A-1 catalytic subunit from Arabidopsis thaliana (Mouse-ear cress).